A 71-amino-acid chain; its full sequence is Cold shock-like protein CspB (71 aa).

Positions 7-67 (GLVKWFNADK…GAKGPAAANV (61 aa)) constitute a CSD domain.

Its subcellular location is the cytoplasm. The chain is Cold shock-like protein CspB (cspB) from Escherichia coli (strain K12).